The primary structure comprises 153 residues: UPF0235 protein C15orf40 (153 aa).

Residues 1–12 (MLRLRSGLRHLR) show a composition bias toward basic residues. Residues 1–55 (MLRLRSGLRHLRATPNTRGSARLLCAEMPKKAGATTKGKSQSKEPERPLPPLGPV) are disordered. Serine 116 bears the Phosphoserine mark.

Belongs to the UPF0235 family.

The protein is UPF0235 protein C15orf40 (C15orf40) of Homo sapiens (Human).